Consider the following 660-residue polypeptide: Acetyl-coenzyme A synthetase (660 aa).

CoA is bound by residues Arg197–Lys200 and Thr317. ATP contacts are provided by residues Gly397–Pro399, Asp421–Thr426, Asp512, and Arg528. Ser536 is a CoA binding site. Residue Arg539 coordinates ATP. Val550 and Val555 together coordinate Mg(2+). An N6-acetyllysine modification is found at Lys625.

This sequence belongs to the ATP-dependent AMP-binding enzyme family. Requires Mg(2+) as cofactor. In terms of processing, acetylated. Deacetylation by the SIR2-homolog deacetylase activates the enzyme.

The enzyme catalyses acetate + ATP + CoA = acetyl-CoA + AMP + diphosphate. Functionally, catalyzes the conversion of acetate into acetyl-CoA (AcCoA), an essential intermediate at the junction of anabolic and catabolic pathways. AcsA undergoes a two-step reaction. In the first half reaction, AcsA combines acetate with ATP to form acetyl-adenylate (AcAMP) intermediate. In the second half reaction, it can then transfer the acetyl group from AcAMP to the sulfhydryl group of CoA, forming the product AcCoA. This is Acetyl-coenzyme A synthetase from Ralstonia pickettii (strain 12J).